The primary structure comprises 425 residues: Serine--tRNA ligase (425 aa).

L-serine is bound at residue Thr-226–Glu-228. ATP contacts are provided by residues Arg-257 to Glu-259 and Val-273. Residue Glu-280 participates in L-serine binding. Glu-344–Ser-347 serves as a coordination point for ATP. An L-serine-binding site is contributed by Thr-382.

This sequence belongs to the class-II aminoacyl-tRNA synthetase family. Type-1 seryl-tRNA synthetase subfamily. As to quaternary structure, homodimer. The tRNA molecule binds across the dimer.

It is found in the cytoplasm. The enzyme catalyses tRNA(Ser) + L-serine + ATP = L-seryl-tRNA(Ser) + AMP + diphosphate + H(+). It carries out the reaction tRNA(Sec) + L-serine + ATP = L-seryl-tRNA(Sec) + AMP + diphosphate + H(+). The protein operates within aminoacyl-tRNA biosynthesis; selenocysteinyl-tRNA(Sec) biosynthesis; L-seryl-tRNA(Sec) from L-serine and tRNA(Sec): step 1/1. Functionally, catalyzes the attachment of serine to tRNA(Ser). Is also able to aminoacylate tRNA(Sec) with serine, to form the misacylated tRNA L-seryl-tRNA(Sec), which will be further converted into selenocysteinyl-tRNA(Sec). This is Serine--tRNA ligase from Mycobacterium avium (strain 104).